We begin with the raw amino-acid sequence, 246 residues long: 4-aminobenzoate synthase (246 aa).

Positions 88, 95, 149, 181, 185, and 188 each coordinate Fe(2+).

It belongs to the CADD family. Homodimer. Requires Fe(2+) as cofactor. The cofactor is Mn(2+).

In terms of biological role, involved in de novo para-aminobenzoate (PABA) biosynthesis. Acts as a self-sacrificing or 'suicide' enzyme that utilizes its own active site tyrosine residue(s) as the substrate for PABA synthesis. The side chain of the tyrosine residue is released from the protein backbone via cleavage of the C(alpha)-C(beta) bond, leaving a glycine in place of the original tyrosine residue. Reaction requires O(2) and a reduced dimetal cofactor. This chain is 4-aminobenzoate synthase, found in Nitrosomonas europaea (strain ATCC 19718 / CIP 103999 / KCTC 2705 / NBRC 14298).